Here is a 182-residue protein sequence, read N- to C-terminus: UPF0397 protein BcerKBAB4_2500 (182 aa).

Helical transmembrane passes span 9–29 (VVAIGIGAALYGVLGLWGFSI), 40–60 (AILTVFGALFGPVAGLLIGLI), 71–91 (WGIWWGWVISSGIIGLAMGLI), 114–134 (IAGLIGIVIAIIFAGSFDIIV), and 142–162 (IVIQVLGATIADVIVFLVLGL).

The protein belongs to the UPF0397 family.

The protein resides in the cell membrane. The chain is UPF0397 protein BcerKBAB4_2500 from Bacillus mycoides (strain KBAB4) (Bacillus weihenstephanensis).